The primary structure comprises 362 residues: Tyrosine-protein kinase SRK2 (362 aa).

The SH2 domain occupies 1–70 (TFLVRESESK…GLCVNLRQPC (70 aa)). The Protein kinase domain maps to 95–348 (ITLIRKLGAG…ALQWRLEDFF (254 aa)). ATP is bound by residues 101 to 109 (LGAGQFGEV) and K123. D214 acts as the Proton acceptor in catalysis.

It belongs to the protein kinase superfamily. Tyr protein kinase family.

It localises to the cytoplasm. The catalysed reaction is L-tyrosyl-[protein] + ATP = O-phospho-L-tyrosyl-[protein] + ADP + H(+). This is Tyrosine-protein kinase SRK2 (SRK2) from Spongilla lacustris (Freshwater sponge).